The following is a 401-amino-acid chain: CCA-adding enzyme (401 aa).

Residues Gly32 and Arg35 each contribute to the ATP site. 2 residues coordinate CTP: Gly32 and Arg35. 2 residues coordinate Mg(2+): Asp45 and Asp47. ATP is bound by residues Arg116, Asp159, Arg162, Arg165, and Arg168. The CTP site is built by Arg116, Asp159, Arg162, Arg165, and Arg168.

The protein belongs to the tRNA nucleotidyltransferase/poly(A) polymerase family. Bacterial CCA-adding enzyme type 3 subfamily. As to quaternary structure, homodimer. Mg(2+) serves as cofactor.

The catalysed reaction is a tRNA precursor + 2 CTP + ATP = a tRNA with a 3' CCA end + 3 diphosphate. It catalyses the reaction a tRNA with a 3' CCA end + 2 CTP + ATP = a tRNA with a 3' CCACCA end + 3 diphosphate. Functionally, catalyzes the addition and repair of the essential 3'-terminal CCA sequence in tRNAs without using a nucleic acid template. Adds these three nucleotides in the order of C, C, and A to the tRNA nucleotide-73, using CTP and ATP as substrates and producing inorganic pyrophosphate. tRNA 3'-terminal CCA addition is required both for tRNA processing and repair. Also involved in tRNA surveillance by mediating tandem CCA addition to generate a CCACCA at the 3' terminus of unstable tRNAs. While stable tRNAs receive only 3'-terminal CCA, unstable tRNAs are marked with CCACCA and rapidly degraded. This is CCA-adding enzyme from Leuconostoc mesenteroides subsp. mesenteroides (strain ATCC 8293 / DSM 20343 / BCRC 11652 / CCM 1803 / JCM 6124 / NCDO 523 / NBRC 100496 / NCIMB 8023 / NCTC 12954 / NRRL B-1118 / 37Y).